The chain runs to 335 residues: Cytoskeleton protein RodZ (335 aa).

At 1–111 (MNTEATHDQN…LGKRRKKRDG (111 aa)) the chain is on the cytoplasmic side. The 53-residue stretch at 19–71 (LRNAREQLGLSQQAVAERLCLKVSTVRDIEEDKAPADLASTFLRGYIRSYARL) folds into the HTH cro/C1-type domain. The segment at residues 30–49 (QQAVAERLCLKVSTVRDIEE) is a DNA-binding region (H-T-H motif). Residues 112–132 (WLMTFTWLVLFVVIGLSGAWW) traverse the membrane as a helical; Signal-anchor for type II membrane protein segment. At 133–335 (WQDHKAQQEE…TLNAEQSPAQ (203 aa)) the chain is on the periplasmic side. A compositionally biased stretch (polar residues) spans 148-164 (DQSSAELNNNQSQSVPL). Positions 148 to 244 (DQSSAELNNN…PLPTDQAGVT (97 aa)) are disordered. Low complexity-rich tracts occupy residues 165–205 (DTST…DPQQ) and 217–239 (DTAA…LPTD).

Belongs to the RodZ family.

Its subcellular location is the cell inner membrane. Functionally, cytoskeletal protein that is involved in cell-shape control through regulation of the length of the long axis. This Escherichia coli O81 (strain ED1a) protein is Cytoskeleton protein RodZ.